The following is a 599-amino-acid chain: Nucleolar protein dnt1 (599 aa).

At Ser-174 the chain carries Phosphoserine. Disordered regions lie at residues 210-262 and 292-599; these read TQEE…PSRL and DKSL…AALV. The segment covering 218-241 has biased composition (polar residues); that stretch reads QSFNSSLTPSQPTTYNRANFFSIN. Over residues 242-251 the composition is skewed to low complexity; that stretch reads DASSDSSSDA. The span at 292-303 shows a compositional bias: basic and acidic residues; it reads DKSLRSSTREVS. Ser-306 is modified (phosphoserine). Positions 307 to 320 are enriched in acidic residues; it reads PNEDSVNDDSSSDV. The span at 321-333 shows a compositional bias: basic and acidic residues; sequence SDEKETEAKHEIR. Positions 344-354 are enriched in polar residues; it reads SHPSTAVPSEN. A compositionally biased stretch (low complexity) spans 364 to 380; it reads LSESSTTSISSSPSENS. Residues 390–401 show a composition bias toward polar residues; that stretch reads DSPNKSLVNDNV. The segment covering 402-413 has biased composition (basic and acidic residues); the sequence is SAKHDKESENGK. Positions 421–431 are enriched in polar residues; sequence QTLVTTSTISA. Positions 436–452 are enriched in acidic residues; that stretch reads PSDEIGSENDSDSDSDS. Polar residues predominate over residues 456–480; the sequence is VPLSQLQKKSQQRNSVSHEIQNRGT. Over residues 483-500 the composition is skewed to basic and acidic residues; it reads SPKEPKAKPSTERPETHR. Residues 501–514 are compositionally biased toward polar residues; the sequence is TLSYSRLSELSKTF. A Phosphothreonine modification is found at Thr-513. 2 stretches are compositionally biased toward basic and acidic residues: residues 533-542 and 558-574; these read ESKEEGRSDE and NSEK…EKRA.

In terms of processing, phosphorylated by clp1.

The protein resides in the cytoplasm. It is found in the nucleus. The protein localises to the nucleolus. It localises to the cytoskeleton. Its subcellular location is the spindle. Its function is as follows. Negatively regulates the septation initiation network (SIN) pathway, independently of the cdc14 phosphatase clp1. May also have a role in silencing rDNA transcription. Required for maintaining the exclusive nucleolus localization of nuc1. The chain is Nucleolar protein dnt1 (dnt1) from Schizosaccharomyces pombe (strain 972 / ATCC 24843) (Fission yeast).